The sequence spans 261 residues: Small ribosomal subunit protein uS2 (261 aa).

This sequence belongs to the universal ribosomal protein uS2 family.

This is Small ribosomal subunit protein uS2 from Enterococcus faecalis (strain ATCC 700802 / V583).